The following is a 188-amino-acid chain: Protein GrpE 2 (188 aa).

Belongs to the GrpE family. In terms of assembly, homodimer.

The protein resides in the cytoplasm. Functionally, participates actively in the response to hyperosmotic and heat shock by preventing the aggregation of stress-denatured proteins, in association with DnaK and GrpE. It is the nucleotide exchange factor for DnaK and may function as a thermosensor. Unfolded proteins bind initially to DnaJ; upon interaction with the DnaJ-bound protein, DnaK hydrolyzes its bound ATP, resulting in the formation of a stable complex. GrpE releases ADP from DnaK; ATP binding to DnaK triggers the release of the substrate protein, thus completing the reaction cycle. Several rounds of ATP-dependent interactions between DnaJ, DnaK and GrpE are required for fully efficient folding. This is Protein GrpE 2 from Buchnera aphidicola subsp. Acyrthosiphon pisum (strain APS) (Acyrthosiphon pisum symbiotic bacterium).